Here is a 292-residue protein sequence, read N- to C-terminus: 33 kDa chaperonin (292 aa).

2 disulfides stabilise this stretch: Cys230/Cys232 and Cys263/Cys266.

This sequence belongs to the HSP33 family. Under oxidizing conditions two disulfide bonds are formed involving the reactive cysteines. Under reducing conditions zinc is bound to the reactive cysteines and the protein is inactive.

The protein localises to the cytoplasm. Its function is as follows. Redox regulated molecular chaperone. Protects both thermally unfolding and oxidatively damaged proteins from irreversible aggregation. Plays an important role in the bacterial defense system toward oxidative stress. This is 33 kDa chaperonin from Shigella dysenteriae serotype 1 (strain Sd197).